We begin with the raw amino-acid sequence, 555 residues long: Glutamine--tRNA ligase (555 aa).

The 'HIGH' region signature appears at 34 to 44 (PEPNGYLHIGH). ATP contacts are provided by residues 35-37 (EPN) and 41-47 (HIGHAKS). Residues aspartate 67 and tyrosine 212 each contribute to the L-glutamine site. Residues threonine 231, 261–262 (RL), and 269–271 (MSK) each bind ATP. The short motif at 268–272 (VMSKR) is the 'KMSKS' region element. The interval 317–324 (TKQDNTIE) is interaction with tRNA.

Belongs to the class-I aminoacyl-tRNA synthetase family. As to quaternary structure, monomer.

The protein resides in the cytoplasm. The enzyme catalyses tRNA(Gln) + L-glutamine + ATP = L-glutaminyl-tRNA(Gln) + AMP + diphosphate. This Citrobacter koseri (strain ATCC BAA-895 / CDC 4225-83 / SGSC4696) protein is Glutamine--tRNA ligase.